Here is a 943-residue protein sequence, read N- to C-terminus: UvrABC system protein A (943 aa).

32-39 (GLSGSGKS) is an ATP binding site. The C4-type zinc finger occupies 251 to 278 (CPVCGFTVPELEPRLFSFNAPFGSCPTC). ABC transporter domains follow at residues 308–589 (WNPI…KKSI) and 609–937 (GSGR…QYLK). 641–648 (GVSGSGKS) lines the ATP pocket. A C4-type zinc finger spans residues 740–766 (CEACSGDGIIKIEMHFLPDVYVPCEVC).

This sequence belongs to the ABC transporter superfamily. UvrA family. As to quaternary structure, forms a heterotetramer with UvrB during the search for lesions.

It localises to the cytoplasm. In terms of biological role, the UvrABC repair system catalyzes the recognition and processing of DNA lesions. UvrA is an ATPase and a DNA-binding protein. A damage recognition complex composed of 2 UvrA and 2 UvrB subunits scans DNA for abnormalities. When the presence of a lesion has been verified by UvrB, the UvrA molecules dissociate. The protein is UvrABC system protein A of Streptococcus mutans serotype c (strain ATCC 700610 / UA159).